The chain runs to 405 residues: uncharacterized protein (405 aa).

Residues 1 to 18 (MPEPVAEPALNGLRLNLR) are Cytoplasmic-facing. Residues 19 to 39 (IVSIVMFNFASYLTIGLPLAV) form a helical membrane-spanning segment. Over 40-46 (LPGYVHD) the chain is Periplasmic. The helical transmembrane segment at 47–67 (VMGFSAFWAGLVISLQYFATL) threads the bilayer. Over 68 to 84 (LSRPHAGRYADSLGPKK) the chain is Cytoplasmic. The helical transmembrane segment at 85–105 (IVVFGLCGCFLSGLGYLTAGL) threads the bilayer. Position 106 (T106) is a topological domain, periplasmic. The chain crosses the membrane as a helical span at residues 107–127 (ASLPVISLLLLCLGRVILGIG). Residues 128–155 (QSFAGTGSTLWGVGVVGSLHIGRVISWN) lie on the Cytoplasmic side of the membrane. A helical membrane pass occupies residues 156-176 (GIVTYGAMAMGAPLGVVFYHW). Residue G177 is a topological domain, periplasmic. The helical transmembrane segment at 178 to 198 (GLQALALIIMGVALVAILLAI) threads the bilayer. Topologically, residues 199-223 (PRPTVKASKGKPLPFRAVLGRVWLY) are cytoplasmic. Residues 224-244 (GMALALASAGFGVIATFITLF) form a helical membrane-spanning segment. At 245-251 (YDAKGWD) the chain is on the periplasmic side. The helical transmembrane segment at 252–272 (GAAFALTLFSCAFVGTRLLFP) threads the bilayer. Over 273 to 282 (NGINRIGGLN) the chain is Cytoplasmic. A helical transmembrane segment spans residues 283-303 (VAMICFSVEIIGLLLVGVATM). Topologically, residues 304-308 (PWMAK) are periplasmic. A helical transmembrane segment spans residues 309-329 (IGVLLAGAGFSLVFPALGVVA). Over 330–343 (VKAVPQQNQGAALA) the chain is Cytoplasmic. Residues 344 to 364 (TYTVFMDLSLGVTGPLAGLVM) traverse the membrane as a helical segment. Residue S365 is a topological domain, periplasmic. Residues 366 to 386 (WAGVPVIYLAAAGLVAIALLL) form a helical membrane-spanning segment. Topologically, residues 387 to 405 (TWRLKKRPPEHVPEAASSS) are cytoplasmic.

The protein belongs to the major facilitator superfamily. YhhS family.

It localises to the cell inner membrane. Functionally, confers high-level resistance to glyphosate when overexpressed. Overexpression has no effect on intracellular arabinose concentrations. This is an uncharacterized protein from Escherichia coli (strain K12).